Consider the following 614-residue polypeptide: Glutamine--fructose-6-phosphate aminotransferase [isomerizing] (614 aa).

The active-site Nucleophile; for GATase activity is cysteine 2. One can recognise a Glutamine amidotransferase type-2 domain in the interval 2–223; sequence CGIIGYIGRR…DGEMAVVTRD (222 aa). 2 SIS domains span residues 292–431 and 463–604; these read YLDR…GRTI and IAVK…VDRP. The For Fru-6P isomerization activity role is filled by lysine 609.

In terms of assembly, homodimer.

The protein localises to the cytoplasm. It catalyses the reaction D-fructose 6-phosphate + L-glutamine = D-glucosamine 6-phosphate + L-glutamate. Catalyzes the first step in hexosamine metabolism, converting fructose-6P into glucosamine-6P using glutamine as a nitrogen source. In Chlorobaculum tepidum (strain ATCC 49652 / DSM 12025 / NBRC 103806 / TLS) (Chlorobium tepidum), this protein is Glutamine--fructose-6-phosphate aminotransferase [isomerizing].